Reading from the N-terminus, the 728-residue chain is Ribosome biogenesis protein bop1-A (728 aa).

The segment at 1–114 is disordered; the sequence is MKRGSQGEAG…ENDSSDEEDI (114 aa). Over residues 55-67 the composition is skewed to acidic residues; sequence SDDEEDHWSEEEE. The span at 68-77 shows a compositional bias: basic and acidic residues; that stretch reads NPGKSPKEII. WD repeat units lie at residues 393-432, 434-474, 514-556, 559-597, 600-639, 643-682, and 698-728; these read GHKDLVRCISVSPSGQWLVSGSDDCSVRFWEVSTGRCMKS, VLEG…RLLC, KHQK…SQNP, KNKGQVQKVLFHPTRPFFFVATQRYVRVYNLLKQELTKK, TNCKWVSSIAVHPAGDNLICGSYDSKLAWFDMDLSTKPYK, HHKKALRAVSFHKSYPLFASGSDDGSVIVCHGMVYNDLLQ, and HRDLGVLDVTFHPTQPWVFSSGADATIRLFT.

Belongs to the WD repeat BOP1/ERB1 family. As to quaternary structure, component of the PeBoW complex, composed of bop1, pes1 and wdr12. The complex is held together by bop1, which interacts with pes1 via its N-terminal domain and with wdr12 via a high-affinity interaction between the seven-bladed beta-propeller domains of the 2 proteins. The PeBoW complex associates with the 66S pre-ribosome.

The protein localises to the nucleus. It is found in the nucleolus. The protein resides in the nucleoplasm. In terms of biological role, component of the PeBoW complex, which is required for maturation of 28S and 5.8S ribosomal RNAs and formation of the 60S ribosome. The protein is Ribosome biogenesis protein bop1-A (bop1-a) of Xenopus laevis (African clawed frog).